The primary structure comprises 694 residues: Nuclear cap-binding protein subunit 3 (694 aa).

Positions 1 to 47 (MAAVRSLRVSVKSDSASDRSESDSESDSDRDAREAEPMEVEEGEVEL) are disordered. Basic and acidic residues predominate over residues 15–36 (SASDRSESDSESDSDRDAREAE). A compositionally biased stretch (acidic residues) spans 37–47 (PMEVEEGEVEL). Residues 126–187 (EALHMSGVDD…LSRMPDKEEV (62 aa)) form an RNA recognition motif (RRM) domain region. A WLDD motif; essential for 7-methylguanosine-containing mRNA cap binding motif is present at residues 155–158 (WIDD). 3 disordered regions span residues 183–277 (DKEE…VKPF), 336–430 (ILKT…MDYD), and 461–694 (LRNS…DSDS). Residues 189 to 203 (NTDSSKPSELPVQTQ) show a composition bias toward polar residues. Residues 212 to 235 (DDDDDDDEEEEGEVDDDDDDDEED) are compositionally biased toward acidic residues. The segment covering 236-264 (EKARDIEDETEKKPQETRETSLSQAERDS) has biased composition (basic and acidic residues). Acidic residues predominate over residues 368-386 (EPIEEEEEEEEDGEEDMDA). Basic and acidic residues predominate over residues 387 to 404 (DDRVVEYKDRGEKERGPR). Over residues 477 to 496 (IGGGGGGGSGGAVEGRGEGG) the composition is skewed to gly residues. Basic and acidic residues-rich tracts occupy residues 501–517 (TSEKVTDVRQLLEEKRQ), 563–595 (SRREPLSDVRSRLGVAKHDNRSLFSEPPKDKKT), and 605–618 (SHKDSGSGDEDKPS). A compositionally biased stretch (acidic residues) spans 634–646 (DSDGVEDEDEEDD). Over residues 685-694 (DGSNGSDSDS) the composition is skewed to low complexity.

Belongs to the NCBP3 family. Component of an alternative cap-binding complex (CBC) composed of NCBP1/CBP80 and NCBP3.

It localises to the nucleus. The protein localises to the cytoplasm. Its function is as follows. Associates with NCBP1/CBP80 to form an alternative cap-binding complex (CBC) which plays a key role in mRNA export. NCBP3 serves as adapter protein linking the capped RNAs (m7GpppG-capped RNA) to NCBP1/CBP80. Unlike the conventional CBC with NCBP2 which binds both small nuclear RNA (snRNA) and messenger (mRNA) and is involved in their export from the nucleus, the alternative CBC with NCBP3 does not bind snRNA and associates only with mRNA thereby playing a role in only mRNA export. This chain is Nuclear cap-binding protein subunit 3, found in Danio rerio (Zebrafish).